A 770-amino-acid chain; its full sequence is Cyclopiane-type diterpene synthase (770 aa).

The segment at 5 to 335 is terpene cyclase; the sequence is ITDEYAVGID…VPRYCKVDRN (331 aa). The Mg(2+) site is built by Asp97 and Asp101. Residues Asp97, Asp101, 190 to 193, Asn234, 238 to 242, and 328 to 329 contribute to the substrate site; these read RIVD, SWDKE, and RY. A DDXXD 1 motif is present at residues 97–101; sequence DDETD. The NSE/DTE signature appears at 234-242; that stretch reads NDLFSWDKE. Positions 336–720 are prenyltransferase; that stretch reads PYKDHLEKYG…WALRLLIMKL (385 aa). The segment at 371-397 is disordered; that stretch reads NQLKEPSSSTYKTHFSPLEPNPGPEQT. A compositionally biased stretch (polar residues) spans 374-383; the sequence is KEPSSSTYKT. Isopentenyl diphosphate is bound by residues Lys423, Arg426, and His455. Mg(2+) is bound by residues Asp462 and Asp466. Residues 462-466 carry the DDXXD 2 motif; the sequence is DDIQD. Residue Arg471 coordinates dimethylallyl diphosphate. Residue Arg472 participates in isopentenyl diphosphate binding. Residues Lys548, Thr549, Gln584, Asn591, Lys620, and Lys630 each coordinate dimethylallyl diphosphate.

This sequence in the N-terminal section; belongs to the terpene synthase family. The protein in the C-terminal section; belongs to the FPP/GGPP synthase family. As to quaternary structure, hexamer. The cofactor is Mg(2+).

The enzyme catalyses isopentenyl diphosphate + (2E,6E)-farnesyl diphosphate = (2E,6E,10E)-geranylgeranyl diphosphate + diphosphate. It catalyses the reaction (2E,6E,10E)-geranylgeranyl diphosphate + H2O = (+)-penichrysol + diphosphate. Its pathway is secondary metabolite biosynthesis; terpenoid biosynthesis. Functionally, bifunctional terpene synthase converts dimethylallyl diphosphate (DMAPP) and isopentenyl diphosphate (IPP) into a cyclopiane-type diterpene. The C-terminal prenyltransferase (PT) domain of PcCS catalyzes formation of geranylgeranyl pyrophosphate (GGPP), whereas the N-terminal terpene cyclase (TC) domain catalyzes the cyclization of GGPP to the cyclopiane-type diterpene penichrysol. This is Cyclopiane-type diterpene synthase from Penicillium chrysogenum (Penicillium notatum).